Reading from the N-terminus, the 234-residue chain is Small ribosomal subunit protein uS3 (234 aa).

A KH type-2 domain is found at V39–K107.

This sequence belongs to the universal ribosomal protein uS3 family. As to quaternary structure, part of the 30S ribosomal subunit. Forms a tight complex with proteins S10 and S14.

In terms of biological role, binds the lower part of the 30S subunit head. Binds mRNA in the 70S ribosome, positioning it for translation. This is Small ribosomal subunit protein uS3 from Haemophilus ducreyi (strain 35000HP / ATCC 700724).